The following is a 593-amino-acid chain: Glutamate decarboxylase 1 (593 aa).

The segment covering 1 to 12 (MASSTPSPATSS) has biased composition (low complexity). Positions 1–22 (MASSTPSPATSSNAGADPNTTN) are disordered. Residue Ser77 is modified to Phosphoserine. 189–191 (QLS) provides a ligand contact to 4-aminobutanoate. N6-(pyridoxal phosphate)lysine is present on Lys404. Arg566 contributes to the 4-aminobutanoate binding site.

This sequence belongs to the group II decarboxylase family. As to quaternary structure, homodimer. The cofactor is pyridoxal 5'-phosphate. Expressed in brain and pancreatic islets.

It catalyses the reaction L-glutamate + H(+) = 4-aminobutanoate + CO2. Catalyzes the synthesis of the inhibitory neurotransmitter gamma-aminobutyric acid (GABA) with pyridoxal 5'-phosphate as cofactor. The polypeptide is Glutamate decarboxylase 1 (Gad1) (Rattus norvegicus (Rat)).